Here is a 311-residue protein sequence, read N- to C-terminus: Ornithine carbamoyltransferase (311 aa).

Carbamoyl phosphate contacts are provided by residues 57 to 60, glutamine 84, arginine 108, and 135 to 138; these read STRT and HPCQ. Residues asparagine 166, aspartate 230, and 234-235 contribute to the L-ornithine site; that span reads SM. Residues 270-271 and arginine 298 each bind carbamoyl phosphate; that span reads CL.

Belongs to the aspartate/ornithine carbamoyltransferase superfamily. OTCase family.

It is found in the cytoplasm. The catalysed reaction is carbamoyl phosphate + L-ornithine = L-citrulline + phosphate + H(+). The protein operates within amino-acid biosynthesis; L-arginine biosynthesis; L-arginine from L-ornithine and carbamoyl phosphate: step 1/3. In terms of biological role, reversibly catalyzes the transfer of the carbamoyl group from carbamoyl phosphate (CP) to the N(epsilon) atom of ornithine (ORN) to produce L-citrulline. In Carboxydothermus hydrogenoformans (strain ATCC BAA-161 / DSM 6008 / Z-2901), this protein is Ornithine carbamoyltransferase.